A 353-amino-acid chain; its full sequence is Heterogeneous nuclear ribonucleoproteins A2/B1 (353 aa).

N-acetylmethionine is present on methionine 1. The residue at position 4 (threonine 4) is a Phosphothreonine. Residue leucine 5 forms a Glycyl lysine isopeptide (Lys-Gly) (interchain with G-Cter in SUMO2) linkage. The short motif at 9–15 (PLERKKR) is the Nuclear localization signal element. RRM domains lie at 21 to 104 (RKLF…ESGK) and 112 to 191 (KKLF…LSRQ). Lysine 22 is covalently cross-linked (Glycyl lysine isopeptide (Lys-Gly) (interchain with G-Cter in SUMO2)). Serine 29 is subject to Phosphoserine. At arginine 38 the chain carries Omega-N-methylarginine. Phosphoserine is present on serine 85. The residue at position 104 (lysine 104) is an N6,N6-dimethyllysine; alternate. Lysine 104 is covalently cross-linked (Glycyl lysine isopeptide (Lys-Gly) (interchain with G-Cter in SUMO2); alternate). Residues lysine 112, lysine 120, and lysine 137 each participate in a glycyl lysine isopeptide (Lys-Gly) (interchain with G-Cter in SUMO2) cross-link. Phosphothreonine is present on threonine 140. Serine 149 is subject to Phosphoserine. Lysine 152 is covalently cross-linked (Glycyl lysine isopeptide (Lys-Gly) (interchain with G-Cter in SUMO2)). Threonine 159 is subject to Phosphothreonine. Residues lysine 168 and lysine 173 each participate in a glycyl lysine isopeptide (Lys-Gly) (interchain with G-Cter in SUMO2); alternate cross-link. Residues lysine 168 and lysine 173 each carry the N6-acetyllysine; alternate modification. Threonine 176 carries the phosphothreonine modification. A Glycyl lysine isopeptide (Lys-Gly) (interchain with G-Cter in SUMO2) cross-link involves residue lysine 186. Phosphoserine is present on residues serine 189 and serine 201. The tract at residues 193 to 353 (MQEVQSSRSG…SGGYGGRSRY (161 aa)) is disordered. Residues 202–223 (GRGGNFGFGDSRGGGGNFGPGP) are compositionally biased toward gly residues. Position 203 is an asymmetric dimethylarginine; alternate (arginine 203). Position 203 is a dimethylated arginine; alternate (arginine 203). Arginine 203 bears the Omega-N-methylarginine; alternate mark. Serine 212 carries the post-translational modification Phosphoserine. Position 213 is an asymmetric dimethylarginine; alternate (arginine 213). Arginine 213 carries the post-translational modification Dimethylated arginine; alternate. Position 213 is an omega-N-methylarginine; alternate (arginine 213). A Phosphoserine modification is found at serine 225. Arginine 228 bears the Omega-N-methylarginine mark. Serine 231 and serine 236 each carry phosphoserine. At arginine 238 the chain carries Omega-N-methylarginine. Position 259 is a phosphoserine (serine 259). The residue at position 266 (arginine 266) is an Asymmetric dimethylarginine; alternate. Omega-N-methylarginine; alternate is present on arginine 266. The nuclear targeting sequence stretch occupies residues 308–347 (QQPSNYGPMKSGNFGGSRNMGGPYGGGNYGPGGSGGSGGY). Positions 320 to 353 (NFGGSRNMGGPYGGGNYGPGGSGGSGGYGGRSRY) are enriched in gly residues. Phosphoserine is present on serine 324. Arginine 325 carries the post-translational modification Omega-N-methylarginine. At tyrosine 331 the chain carries Phosphotyrosine. Phosphoserine occurs at positions 341 and 344. A Phosphotyrosine modification is found at tyrosine 347. Omega-N-methylarginine is present on arginine 350.

In terms of assembly, homodimer; dimerization is required for nucleocytoplasmic translocation. Identified in the spliceosome C complex. Identified in a IGF2BP1-dependent mRNP granule complex containing untranslated mRNAs. Interacts with IGF2BP1. Interacts with C9orf72. Interacts with DGCR8. Interacts with TARDBP. Interacts with CKAP5. Interacts with TBK1. Interacts with STING1. Interacts with SRC. Interacts with PPIA/CYPA. Interacts (via C-terminus) with FAM76B; the interaction results in retention of HNRNPA2B1 in the nucleus and inhibition of the NF-kappa-B-mediated inflammatory pathway. Interacts with NF-kappa-B inhibitors NFKBIA and NFKBIE; the interaction may be mediated by the RRM2 domain of HNRNPA2B1, and HNRNPA2B1 may interact simultaneously with FAM76B and either NFKBIA or NFKBIE to form a complex. In terms of processing, sumoylated in exosomes, promoting miRNAs-binding. Asymmetric dimethylation at Arg-266 constitutes the major methylation site. According to a report, methylation affects subcellular location and promotes nuclear localization. According to another report, methylation at Arg-266 does not influence nucleocytoplasmic shuttling.

The protein resides in the nucleus. Its subcellular location is the nucleoplasm. It is found in the cytoplasm. The protein localises to the cytoplasmic granule. It localises to the secreted. The protein resides in the extracellular exosome. Functionally, heterogeneous nuclear ribonucleoprotein (hnRNP) that associates with nascent pre-mRNAs, packaging them into hnRNP particles. The hnRNP particle arrangement on nascent hnRNA is non-random and sequence-dependent and serves to condense and stabilize the transcripts and minimize tangling and knotting. Packaging plays a role in various processes such as transcription, pre-mRNA processing, RNA nuclear export, subcellular location, mRNA translation and stability of mature mRNAs. Forms hnRNP particles with at least 20 other different hnRNP and heterogeneous nuclear RNA in the nucleus. Involved in transport of specific mRNAs to the cytoplasm in oligodendrocytes and neurons: acts by specifically recognizing and binding the A2RE (21 nucleotide hnRNP A2 response element) or the A2RE11 (derivative 11 nucleotide oligonucleotide) sequence motifs present on some mRNAs, and promotes their transport to the cytoplasm. Specifically binds single-stranded telomeric DNA sequences, protecting telomeric DNA repeat against endonuclease digestion. Also binds other RNA molecules, such as primary miRNA (pri-miRNAs): acts as a nuclear 'reader' of the N6-methyladenosine (m6A) mark by specifically recognizing and binding a subset of nuclear m6A-containing pri-miRNAs. Binding to m6A-containing pri-miRNAs promotes pri-miRNA processing by enhancing binding of DGCR8 to pri-miRNA transcripts. Involved in miRNA sorting into exosomes following sumoylation, possibly by binding (m6A)-containing pre-miRNAs. Acts as a regulator of efficiency of mRNA splicing, possibly by binding to m6A-containing pre-mRNAs. Plays a role in the splicing of pyruvate kinase PKM by binding repressively to sequences flanking PKM exon 9, inhibiting exon 9 inclusion and resulting in exon 10 inclusion and production of the PKM M2 isoform. Also plays a role in the activation of the innate immune response. Mechanistically, senses the presence of viral DNA in the nucleus, homodimerizes and is demethylated by JMJD6. In turn, translocates to the cytoplasm where it activates the TBK1-IRF3 pathway, leading to interferon alpha/beta production. Its function is as follows. (Microbial infection) Involved in the transport of HIV-1 genomic RNA out of the nucleus, to the microtubule organizing center (MTOC), and then from the MTOC to the cytoplasm: acts by specifically recognizing and binding the A2RE (21 nucleotide hnRNP A2 response element) sequence motifs present on HIV-1 genomic RNA, and promotes its transport. This chain is Heterogeneous nuclear ribonucleoproteins A2/B1 (HNRNPA2B1), found in Homo sapiens (Human).